We begin with the raw amino-acid sequence, 184 residues long: ADP-ribosylation factor-like protein 2 (184 aa).

The N-myristoyl glycine moiety is linked to residue Gly-2. A GTP-binding site is contributed by 23-30 (GLDNAGKT). Ser-45 carries the phosphoserine modification. Residues 66–70 (DVGGQ) and Gly-68 each bind GTP. Lys-71 participates in a covalent cross-link: Glycyl lysine isopeptide (Lys-Gly) (interchain with G-Cter in ubiquitin). Position 125 to 128 (125 to 128 (NKQD)) interacts with GTP.

This sequence belongs to the small GTPase superfamily. Arf family. Found in a complex with ARL2, ARL2BP and SLC25A6. Found in a complex with at least ARL2, PPP2CB, PPP2R1A, PPP2R2A, PPP2R5E and TBCD. Found in a complex with ARL2, ARL2BP and SLC25A4. The GTP-bound form interacts with PDE6D. Interacts with ELMOD2. The GTP-bound form interacts with ARL2BP. Interacts, preferentially in its GDP-bound state, with TBCD. Interacts with UNC119. Post-translationally, not N-myristoylated.

The protein resides in the mitochondrion intermembrane space. The protein localises to the cytoplasm. Its subcellular location is the cytoskeleton. It is found in the microtubule organizing center. It localises to the centrosome. The protein resides in the nucleus. Its function is as follows. Small GTP-binding protein which cycles between an inactive GDP-bound and an active GTP-bound form, and the rate of cycling is regulated by guanine nucleotide exchange factors (GEF) and GTPase-activating proteins (GAP). GTP-binding protein that does not act as an allosteric activator of the cholera toxin catalytic subunit. Regulates formation of new microtubules and centrosome integrity. Prevents the TBCD-induced microtubule destruction. Participates in association with TBCD, in the disassembly of the apical junction complexes. Antagonizes the effect of TBCD on epithelial cell detachment and tight and adherens junctions disassembly. Together with ARL2, plays a role in the nuclear translocation, retention and transcriptional activity of STAT3. Component of a regulated secretory pathway involved in Ca(2+)-dependent release of acetylcholine. Required for normal progress through the cell cycle. Also regulates mitochondrial integrity and function. In Homo sapiens (Human), this protein is ADP-ribosylation factor-like protein 2 (ARL2).